Here is a 101-residue protein sequence, read N- to C-terminus: Small ribosomal subunit protein uS10 (101 aa).

It belongs to the universal ribosomal protein uS10 family. In terms of assembly, part of the 30S ribosomal subunit.

Involved in the binding of tRNA to the ribosomes. This is Small ribosomal subunit protein uS10 from Amoebophilus asiaticus (strain 5a2).